A 20-amino-acid polypeptide reads, in one-letter code: Cytochrome c oxidase subunit 5B heart, mitochondrial (20 aa).

The disordered stretch occupies residues 1 to 20 (XXLKGIPTDEEQATGLEEYA).

It belongs to the cytochrome c oxidase subunit 5B family. As to quaternary structure, component of the cytochrome c oxidase (complex IV, CIV), a multisubunit enzyme composed of 14 subunits. The complex is composed of a catalytic core of 3 subunits MT-CO1, MT-CO2 and MT-CO3, encoded in the mitochondrial DNA, and 11 supernumerary subunits COX4I, COX5A, COX5B, COX6A, COX6B, COX6C, COX7A, COX7B, COX7C, COX8 and NDUFA4, which are encoded in the nuclear genome. The complex exists as a monomer or a dimer and forms supercomplexes (SCs) in the inner mitochondrial membrane with NADH-ubiquinone oxidoreductase (complex I, CI) and ubiquinol-cytochrome c oxidoreductase (cytochrome b-c1 complex, complex III, CIII), resulting in different assemblies (supercomplex SCI(1)III(2)IV(1) and megacomplex MCI(2)III(2)IV(2)).

The protein localises to the mitochondrion inner membrane. Its pathway is energy metabolism; oxidative phosphorylation. Its function is as follows. Component of the cytochrome c oxidase, the last enzyme in the mitochondrial electron transport chain which drives oxidative phosphorylation. The respiratory chain contains 3 multisubunit complexes succinate dehydrogenase (complex II, CII), ubiquinol-cytochrome c oxidoreductase (cytochrome b-c1 complex, complex III, CIII) and cytochrome c oxidase (complex IV, CIV), that cooperate to transfer electrons derived from NADH and succinate to molecular oxygen, creating an electrochemical gradient over the inner membrane that drives transmembrane transport and the ATP synthase. Cytochrome c oxidase is the component of the respiratory chain that catalyzes the reduction of oxygen to water. Electrons originating from reduced cytochrome c in the intermembrane space (IMS) are transferred via the dinuclear copper A center (CU(A)) of subunit 2 and heme A of subunit 1 to the active site in subunit 1, a binuclear center (BNC) formed by heme A3 and copper B (CU(B)). The BNC reduces molecular oxygen to 2 water molecules using 4 electrons from cytochrome c in the IMS and 4 protons from the mitochondrial matrix. The polypeptide is Cytochrome c oxidase subunit 5B heart, mitochondrial (Oncorhynchus mykiss (Rainbow trout)).